Reading from the N-terminus, the 384-residue chain is Anhydro-N-acetylmuramic acid kinase (384 aa).

Residue Gly-9–Asp-16 participates in ATP binding.

This sequence belongs to the anhydro-N-acetylmuramic acid kinase family.

The enzyme catalyses 1,6-anhydro-N-acetyl-beta-muramate + ATP + H2O = N-acetyl-D-muramate 6-phosphate + ADP + H(+). The protein operates within amino-sugar metabolism; 1,6-anhydro-N-acetylmuramate degradation. Its pathway is cell wall biogenesis; peptidoglycan recycling. In terms of biological role, catalyzes the specific phosphorylation of 1,6-anhydro-N-acetylmuramic acid (anhMurNAc) with the simultaneous cleavage of the 1,6-anhydro ring, generating MurNAc-6-P. Is required for the utilization of anhMurNAc either imported from the medium or derived from its own cell wall murein, and thus plays a role in cell wall recycling. The sequence is that of Anhydro-N-acetylmuramic acid kinase from Rippkaea orientalis (strain PCC 8801 / RF-1) (Cyanothece sp. (strain PCC 8801)).